Reading from the N-terminus, the 87-residue chain is UPF0250 protein plu1293 (87 aa).

The protein belongs to the UPF0250 family.

The chain is UPF0250 protein plu1293 from Photorhabdus laumondii subsp. laumondii (strain DSM 15139 / CIP 105565 / TT01) (Photorhabdus luminescens subsp. laumondii).